Here is a 949-residue protein sequence, read N- to C-terminus: Protocadherin alpha-11 (949 aa).

A signal peptide spans 1-29 (MFGFQRRGLGTPRLQLWLLLLEFWEVGSG). 6 Cadherin domains span residues 30–133 (QLHY…PPVF), 157–242 (ASDA…DPEF), 243–349 (DKSE…SPEV), 350–454 (AVTS…APAF), 455–564 (AQPE…APAL), and 580–677 (VPRS…APKA). At 30–696 (QLHYSVSEEA…SPEAALVDVN (667 aa)) the chain is on the extracellular side. Asn265 and Asn304 each carry an N-linked (GlcNAc...) asparagine glycan. An N-linked (GlcNAc...) asparagine glycan is attached at Asn547. Residues 697–717 (VYLIIAICVVSSLLVLTLLLY) form a helical membrane-spanning segment. The Cytoplasmic portion of the chain corresponds to 718 to 949 (TALWWSATPT…GNSTTDNSDQ (232 aa)). PXXP repeat units lie at residues 733–736 (PGKP) and 773–776 (PSLP). Positions 733–893 (PGKPTLVCSR…PDKFIIPGSP (161 aa)) are 6 X 4 AA repeats of P-X-X-P. 2 disordered regions span residues 753–807 (RRQR…DWRY) and 826–949 (ILRA…NSDQ). Over residues 780–789 (NKEEEGERQE) the composition is skewed to basic and acidic residues. 4 PXXP repeats span residues 795 to 798 (PGQP), 831 to 834 (PGGP), 872 to 875 (PGNP), and 890 to 893 (PGSP). A compositionally biased stretch (basic and acidic residues) spans 908–922 (DKSDFITFGKKEETK).

The protein localises to the cell membrane. Functionally, potential calcium-dependent cell-adhesion protein. May be involved in the establishment and maintenance of specific neuronal connections in the brain. This Homo sapiens (Human) protein is Protocadherin alpha-11 (PCDHA11).